The sequence spans 421 residues: D-amino acid dehydrogenase (421 aa).

3 to 17 (VIVLGSGVIGVASAY) lines the FAD pocket.

It belongs to the DadA oxidoreductase family. FAD is required as a cofactor.

It carries out the reaction a D-alpha-amino acid + A + H2O = a 2-oxocarboxylate + AH2 + NH4(+). It functions in the pathway amino-acid degradation; D-alanine degradation; NH(3) and pyruvate from D-alanine: step 1/1. Oxidative deamination of D-amino acids. The chain is D-amino acid dehydrogenase from Acinetobacter baumannii (strain ATCC 17978 / DSM 105126 / CIP 53.77 / LMG 1025 / NCDC KC755 / 5377).